A 118-amino-acid polypeptide reads, in one-letter code: Large ribosomal subunit protein uL24 (118 aa).

This sequence belongs to the universal ribosomal protein uL24 family. In terms of assembly, part of the 50S ribosomal subunit.

Functionally, one of two assembly initiator proteins, it binds directly to the 5'-end of the 23S rRNA, where it nucleates assembly of the 50S subunit. One of the proteins that surrounds the polypeptide exit tunnel on the outside of the subunit. The polypeptide is Large ribosomal subunit protein uL24 (Prochlorococcus marinus (strain MIT 9303)).